A 341-amino-acid polypeptide reads, in one-letter code: Very-long-chain 3-oxoacyl-CoA reductase (341 aa).

A helical membrane pass occupies residues 22 to 42; it reads AIYGFLLAGVAAFAAPIVSTI. Residues Leu67, Asp123, Asp131, Asn150, Tyr217, Lys221, Ile250, and Thr252 each coordinate NADP(+). The active-site Proton donor is the Tyr217. Lys221 functions as the Lowers pKa of active site Tyr in the catalytic mechanism.

It belongs to the short-chain dehydrogenases/reductases (SDR) family.

The protein resides in the endoplasmic reticulum membrane. The enzyme catalyses a very-long-chain (3R)-3-hydroxyacyl-CoA + NADP(+) = a very-long-chain 3-oxoacyl-CoA + NADPH + H(+). It participates in lipid metabolism; fatty acid biosynthesis. In terms of biological role, component of the microsomal membrane bound fatty acid elongation system, which produces the 26-carbon very long-chain fatty acids (VLCFA) from palmitate. Catalyzes the reduction of the 3-ketoacyl-CoA intermediate that is formed in each cycle of fatty acid elongation. VLCFAs serve as precursors for ceramide and sphingolipids. In Phaeosphaeria nodorum (strain SN15 / ATCC MYA-4574 / FGSC 10173) (Glume blotch fungus), this protein is Very-long-chain 3-oxoacyl-CoA reductase.